A 142-amino-acid chain; its full sequence is MAP3K7 C-terminal-like protein (142 aa).

Ubiquitous.

The polypeptide is MAP3K7 C-terminal-like protein (Map3k7cl) (Mus musculus (Mouse)).